Consider the following 1406-residue polypeptide: DNA-directed RNA polymerase subunit beta' (1406 aa).

The Zn(2+) site is built by Cys70, Cys72, Cys85, and Cys88. The Mg(2+) site is built by Asp460, Asp462, and Asp464. Zn(2+) contacts are provided by Cys814, Cys888, Cys895, and Cys898.

The protein belongs to the RNA polymerase beta' chain family. In terms of assembly, the RNAP catalytic core consists of 2 alpha, 1 beta, 1 beta' and 1 omega subunit. When a sigma factor is associated with the core the holoenzyme is formed, which can initiate transcription. The cofactor is Mg(2+). Zn(2+) is required as a cofactor.

The enzyme catalyses RNA(n) + a ribonucleoside 5'-triphosphate = RNA(n+1) + diphosphate. In terms of biological role, DNA-dependent RNA polymerase catalyzes the transcription of DNA into RNA using the four ribonucleoside triphosphates as substrates. The polypeptide is DNA-directed RNA polymerase subunit beta' (Photorhabdus laumondii subsp. laumondii (strain DSM 15139 / CIP 105565 / TT01) (Photorhabdus luminescens subsp. laumondii)).